A 429-amino-acid polypeptide reads, in one-letter code: Threonine synthase (429 aa).

N6-(pyridoxal phosphate)lysine is present on Lys-108.

It belongs to the threonine synthase family. It depends on pyridoxal 5'-phosphate as a cofactor.

The enzyme catalyses O-phospho-L-homoserine + H2O = L-threonine + phosphate. It functions in the pathway amino-acid biosynthesis; L-threonine biosynthesis; L-threonine from L-aspartate: step 5/5. In terms of biological role, catalyzes the gamma-elimination of phosphate from L-phosphohomoserine and the beta-addition of water to produce L-threonine. In Buchnera aphidicola subsp. Acyrthosiphon pisum (strain APS) (Acyrthosiphon pisum symbiotic bacterium), this protein is Threonine synthase (thrC).